Reading from the N-terminus, the 141-residue chain is Putative pre-16S rRNA nuclease (141 aa).

It belongs to the YqgF nuclease family.

Its subcellular location is the cytoplasm. Functionally, could be a nuclease involved in processing of the 5'-end of pre-16S rRNA. The protein is Putative pre-16S rRNA nuclease of Amoebophilus asiaticus (strain 5a2).